Reading from the N-terminus, the 110-residue chain is MLEKTTRMNYLFDFYQSLLTQKQRSYMSLYYLDDLSLGEIAEEFDVSRQAVYDNIKRTEAMLEEYEEKLVLLQKFQERQRLVAKLKQLISEEEHVNEEMKQVVEAIEKLD.

Belongs to the UPF0122 family.

Its function is as follows. Might take part in the signal recognition particle (SRP) pathway. This is inferred from the conservation of its genetic proximity to ftsY/ffh. May be a regulatory protein. This Bacillus cereus (strain AH187) protein is UPF0122 protein BCAH187_A3894.